A 688-amino-acid chain; its full sequence is Methionine--tRNA ligase (688 aa).

Residues 13–23 carry the 'HIGH' region motif; sequence PYANGPIHIGH. Cys-144, Cys-147, Cys-157, and Cys-160 together coordinate Zn(2+). The short motif at 334–338 is the 'KMSKS' region element; that stretch reads KMSKS. Residue Lys-337 coordinates ATP. The tRNA-binding domain maps to 582-688; it reads DFAKIDLRVA…AGAVPGMRVR (107 aa).

It belongs to the class-I aminoacyl-tRNA synthetase family. MetG type 1 subfamily. Homodimer. Zn(2+) is required as a cofactor.

The protein resides in the cytoplasm. The enzyme catalyses tRNA(Met) + L-methionine + ATP = L-methionyl-tRNA(Met) + AMP + diphosphate. In terms of biological role, is required not only for elongation of protein synthesis but also for the initiation of all mRNA translation through initiator tRNA(fMet) aminoacylation. This is Methionine--tRNA ligase from Ralstonia nicotianae (strain ATCC BAA-1114 / GMI1000) (Ralstonia solanacearum).